Consider the following 356-residue polypeptide: 5-formaminoimidazole-4-carboxamide-1-(beta)-D-ribofuranosyl 5'-monophosphate synthetase 1 (356 aa).

2 residues coordinate 5-amino-1-(5-phospho-beta-D-ribosyl)imidazole-4-carboxamide: H27 and S94. An ATP-grasp domain is found at 101 to 333 (TENFAEMAVP…YADLIQEDLS (233 aa)). ATP contacts are provided by residues 145–196 (PRDI…TRYY) and E226. 5-amino-1-(5-phospho-beta-D-ribosyl)imidazole-4-carboxamide is bound at residue N255. Mg(2+)-binding residues include E293 and E306.

The protein belongs to the phosphohexose mutase family. The cofactor is Mg(2+). Requires Mn(2+) as cofactor.

The catalysed reaction is 5-amino-1-(5-phospho-beta-D-ribosyl)imidazole-4-carboxamide + formate + ATP = 5-formamido-1-(5-phospho-D-ribosyl)imidazole-4-carboxamide + ADP + phosphate. The protein operates within purine metabolism; IMP biosynthesis via de novo pathway; 5-formamido-1-(5-phospho-D-ribosyl)imidazole-4-carboxamide from 5-amino-1-(5-phospho-D-ribosyl)imidazole-4-carboxamide (formate route): step 1/1. Its function is as follows. Catalyzes the ATP- and formate-dependent formylation of 5-aminoimidazole-4-carboxamide-1-beta-d-ribofuranosyl 5'-monophosphate (AICAR) to 5-formaminoimidazole-4-carboxamide-1-beta-d-ribofuranosyl 5'-monophosphate (FAICAR) in the absence of folates. The sequence is that of 5-formaminoimidazole-4-carboxamide-1-(beta)-D-ribofuranosyl 5'-monophosphate synthetase 1 from Methanosarcina mazei (strain ATCC BAA-159 / DSM 3647 / Goe1 / Go1 / JCM 11833 / OCM 88) (Methanosarcina frisia).